A 129-amino-acid chain; its full sequence is Small ribosomal subunit protein uS11 (129 aa).

This sequence belongs to the universal ribosomal protein uS11 family. As to quaternary structure, part of the 30S ribosomal subunit. Interacts with proteins S7 and S18. Binds to IF-3.

Its function is as follows. Located on the platform of the 30S subunit, it bridges several disparate RNA helices of the 16S rRNA. Forms part of the Shine-Dalgarno cleft in the 70S ribosome. The sequence is that of Small ribosomal subunit protein uS11 from Marinobacter nauticus (strain ATCC 700491 / DSM 11845 / VT8) (Marinobacter aquaeolei).